The sequence spans 96 residues: Large ribosomal subunit protein bL21 (96 aa).

It belongs to the bacterial ribosomal protein bL21 family. As to quaternary structure, part of the 50S ribosomal subunit. Contacts protein L20.

Functionally, this protein binds to 23S rRNA in the presence of protein L20. In Hydrogenobaculum sp. (strain Y04AAS1), this protein is Large ribosomal subunit protein bL21.